A 306-amino-acid chain; its full sequence is Ribonucleoside-diphosphate reductase small subunit (306 aa).

Residues D66, E96, and H99 each contribute to the Fe cation site. Residue Y103 is part of the active site. The helical transmembrane segment at 153–173 (ILMILIEGIFFVSSFAAIAYL) threads the bilayer. Fe cation-binding residues include E159, E193, and H196.

This sequence belongs to the ribonucleoside diphosphate reductase small chain family. As to quaternary structure, heterotetramer composed of a homodimer of the large subunit (R1) and a homodimer of the small subunit (R2). Larger multisubunit protein complex are also active, composed of (R1)n(R2)n. Fe cation is required as a cofactor.

It is found in the host membrane. It carries out the reaction a 2'-deoxyribonucleoside 5'-diphosphate + [thioredoxin]-disulfide + H2O = a ribonucleoside 5'-diphosphate + [thioredoxin]-dithiol. In terms of biological role, ribonucleoside-diphosphate reductase holoenzyme provides the precursors necessary for viral DNA synthesis. Allows virus growth in non-dividing cells, as well as reactivation from latency in infected hosts. Catalyzes the biosynthesis of deoxyribonucleotides from the corresponding ribonucleotides. This Varicella-zoster virus (strain Dumas) (HHV-3) protein is Ribonucleoside-diphosphate reductase small subunit.